A 337-amino-acid chain; its full sequence is DNA-directed RNA polymerase subunit alpha (337 aa).

The interval 1 to 231 is alpha N-terminal domain (alpha-NTD); that stretch reads MRNITTSAYT…KQLSVFDKIT (231 aa). Residues 248–337 form an alpha C-terminal domain (alpha-CTD) region; sequence NTKLLQNITD…IAELKAQNEG (90 aa).

Belongs to the RNA polymerase alpha chain family. As to quaternary structure, homodimer. The RNAP catalytic core consists of 2 alpha, 1 beta, 1 beta' and 1 omega subunit. When a sigma factor is associated with the core the holoenzyme is formed, which can initiate transcription.

It catalyses the reaction RNA(n) + a ribonucleoside 5'-triphosphate = RNA(n+1) + diphosphate. Functionally, DNA-dependent RNA polymerase catalyzes the transcription of DNA into RNA using the four ribonucleoside triphosphates as substrates. This Campylobacter jejuni subsp. jejuni serotype O:6 (strain 81116 / NCTC 11828) protein is DNA-directed RNA polymerase subunit alpha.